A 447-amino-acid polypeptide reads, in one-letter code: Gamma-glutamyl phosphate reductase (447 aa).

It belongs to the gamma-glutamyl phosphate reductase family.

The protein resides in the cytoplasm. It catalyses the reaction L-glutamate 5-semialdehyde + phosphate + NADP(+) = L-glutamyl 5-phosphate + NADPH + H(+). The protein operates within amino-acid biosynthesis; L-proline biosynthesis; L-glutamate 5-semialdehyde from L-glutamate: step 2/2. In terms of biological role, catalyzes the NADPH-dependent reduction of L-glutamate 5-phosphate into L-glutamate 5-semialdehyde and phosphate. The product spontaneously undergoes cyclization to form 1-pyrroline-5-carboxylate. The polypeptide is Gamma-glutamyl phosphate reductase (Methanosarcina barkeri (strain Fusaro / DSM 804)).